The primary structure comprises 373 residues: Protein phosphatase 1K, mitochondrial (373 aa).

One can recognise a PPM-type phosphatase domain in the interval 95–347; the sequence is KVGCSTQLGK…DNSTAIVVPF (253 aa). Mg(2+)-binding residues include D128, G129, and D338.

The protein belongs to the PP2C family. Mg(2+) serves as cofactor. The cofactor is Mn(2+).

The protein resides in the mitochondrion matrix. It carries out the reaction O-phospho-L-seryl-[protein] + H2O = L-seryl-[protein] + phosphate. The catalysed reaction is O-phospho-L-threonyl-[protein] + H2O = L-threonyl-[protein] + phosphate. This is Protein phosphatase 1K, mitochondrial (ppm1k) from Xenopus laevis (African clawed frog).